We begin with the raw amino-acid sequence, 332 residues long: Homeobox protein DLX-2 (332 aa).

Residues 19–28 (ASSTYHQHQQ) show a composition bias toward polar residues. The interval 19-83 (ASSTYHQHQQ…QHPAGGGGGG (65 aa)) is disordered. Residues 40-49 (NSNSSSSNSS) show a composition bias toward low complexity. The segment covering 55-75 (ESPTLPVSTATDSSYYTNQQH) has biased composition (polar residues). Residues 155–214 (VRKPRTIYSSFQLAALQRRFQKTQYLALPERAELAASLGLTQTQVKIWFQNRRSKFKKMW) constitute a DNA-binding region (homeobox). Disordered regions lie at residues 219–272 (IPTE…SSPS) and 304–332 (PSQTPQAHHHHHHHHHAGGGAPVSAGTIF). Position 235 is a phosphoserine (Ser235). Residues 253–266 (AGGGPGSGGGGAGS) are compositionally biased toward gly residues. Residues 310–320 (AHHHHHHHHHA) are compositionally biased toward basic residues.

It belongs to the distal-less homeobox family. In terms of assembly, interacts (via homeobox DNA-binding domain) with POU4F2; this interaction enhances retinal ganglion cell (RGC) differentiation. Phosphorylated by serine/threonine kinases. Expressed only in neural and other ectodermal structures of the head: the brain, the vomeronasal organ, and the preameloblasts of the teeth. Primarily expressed in the germinal cells of the ventral forebrain in the midgestational embryo, and in both dorsal and ventral ventricular zones in late embryogenesis and early postnatal life. Expressed in the inner nuclear layer of the retina.

The protein localises to the nucleus. Acts as a transcriptional activator. Activates transcription of CGA/alpha-GSU, via binding to the downstream activin regulatory element (DARE) in the gene promoter. Plays a role in terminal differentiation of interneurons, such as amacrine and bipolar cells in the developing retina. Likely to play a regulatory role in the development of the ventral forebrain. May play a role in craniofacial patterning and morphogenesis. The polypeptide is Homeobox protein DLX-2 (Dlx2) (Mus musculus (Mouse)).